Consider the following 1526-residue polypeptide: MTEVISNKITAKDGATSLKDIDDKRWVWISDPETAFTKAWIKEDLPDKKYVVRYNNSRDEKIVGEDEIDPVNPAKFDRVNDMAELTYLNEPAVTYNLEQRYLSDQIYTYSGLFLVAVNPYCGLPIYTKDIIQLYKDKTQERKLPHVFAIADLAYNNLLENKENQSILVTGESGAGKTENTKRIIQYLAAIASSTTVGSSQVEEQIIKTNPVLESFGNARTVRNNNSSRFGKFIKVEFSLSGEISNAAIEWYLLEKSRVVHQNEFERNYHVFYQLLSGADTALKNKLLLTDNCNDYRYLKDSVHIIDGVDDKEEFKTLLAAFKTLGFDDKENFDLFNILSIILHMGNIDVGADRSGIARLLNPDEIDKLCHLLGVSPELFSQNLVRPRIKAGHEWVISARSQTQVISSIEALAKAIYERNFGWLVKRLNTSLNHSNAQSYFIGILDIAGFEIFEKNSFEQLCINYTNEKLQQFFNHHMFVLEQEEYMKEEIVWDFIDFGHDLQPTIDLIEKANPIGILSCLDEECVMPKATDATFTSKLDALWRNKSLKYKPFKFADQGFILTHYAADVPYSTEGWLEKNTDPLNENVAKLLAQSTNKHVATLFSDYQETETKTVRGRTKKGLFRTVAQRHKEQLNQLMNQFNSTQPHFIRCIVPNEEKKMHTFNRPLVLGQLRCNGVLEGIRITRAGFPNRLPFNDFRVRYEIMAHLPTGTYVESRRASVMILEELKIDEASYRIGVSKIFFKAGVLAELEERRVATLQRLMTMLQTRIRGFLQRKIFQKRLKDIQAIKLLQANLQVYNEFRTFPWAKLFFNLRPLLSSTQNDKQLKKRDAEIIELKYELKKQQNSKSEVERDLVETNNSLTAVENLLTTERAIALDKEEILRRTQERLANIEDSFSETKQQNENLQRESASLKQINNELESELLEKTSKVETLLSEQNELKEKLSLEEKDLLDTKGELESLRENNATVLSEKAEFNEQCKSLQETIVTKDAELDKLTKYISDYKTEIQEMRLTNQKMNEKSIQQEGSLSESLKRVKKLERENSTLISDVSILKQQKEELSVLKGVQELTINNLEEKVNYLEADVKQLPKLKKELESLNDKDQLYQLQATKNKELEAKVKECLNNIKSLTKELENKEEKCQNLSDASLKYIELQEIHENLLLKVSDLENYKKKYEGLQLDLEGLKDVDTNFQELSKKHRDLTFNHESLLRQSASYKEKLSLASSENKDLSNKVSSLTKQVNELSPKASKVPELERKITNLMHEYSQLGKTFEDEKRKALIASRDNEELRSLKSELESKRKLEVEYQKVLEEVKTTRSLRSEVTLLRNKVADHESIRSKLSEVEMKLVDTRKELNSALDSCKKREAEIHRLKEHRPSGKENNIPAVKTTEPVLKNIPQRKTIFDLQQRNANQALYENLKRDYDRLNLEKHNLEKQVNELKGAEVSPQPTGQSLQHVNLAHAIELKALKDQINSEKAKMFSVQVQYEKREQELQKRIASLEKVNKDSLIDVRALRDRIASLEDELRAA.

Residues 22–73 (DDKRWVWISDPETAFTKAWIKEDLPDKKYVVRYNNSRDEKIVGEDEIDPVNP) enclose the Myosin N-terminal SH3-like domain. Residues 77–755 (DRVNDMAELT…VLAELEERRV (679 aa)) form the Myosin motor domain. 170-177 (GESGAGKT) provides a ligand contact to ATP. Actin-binding regions lie at residues 634-656 (LNQLMNQFNSTQPHFIRCIVPNE) and 734-748 (RIGVSKIFFKAGVLA). Residues 758 to 787 (LQRLMTMLQTRIRGFLQRKIFQKRLKDIQA) enclose the IQ domain. The stretch at 875–1244 (ALDKEEILRR…SLTKQVNELS (370 aa)) forms a coiled coil. Position 1044 is a phosphoserine (Ser-1044).

The protein belongs to the TRAFAC class myosin-kinesin ATPase superfamily. Myosin family. As to quaternary structure, binds to cdc4 and rlc1.

Functionally, required for cell division. It is a component of the cdc12 'spot', a structure thought to mark the site of septation. May work in conjunction with myo3. In Schizosaccharomyces pombe (strain 972 / ATCC 24843) (Fission yeast), this protein is Myosin type-2 heavy chain 1 (myo2).